A 123-amino-acid chain; its full sequence is Histone H2B.1/H2B.2 (123 aa).

Residues 1-30 (MPPKVSGKAAKKAGKAQKNITKGDKKKNRK) are disordered. O-linked (GlcNAc) serine glycosylation is present at serine 110. A Glycyl lysine isopeptide (Lys-Gly) (interchain with G-Cter in ubiquitin) cross-link involves residue lysine 118.

This sequence belongs to the histone H2B family. The nucleosome is a histone octamer containing two molecules each of H2A, H2B, H3 and H4 assembled in one H3-H4 heterotetramer and two H2A-H2B heterodimers. The octamer wraps approximately 147 bp of DNA. In terms of processing, monoubiquitination of Lys-118 gives a specific tag for epigenetic transcriptional activation and is also prerequisite for histone H3 'Lys-4' and 'Lys-79' methylation. Post-translationally, glcNAcylation at Ser-110 promotes monoubiquitination of Lys-118. It fluctuates in response to extracellular glucose, and associates with transcribed genes.

It localises to the nucleus. The protein localises to the chromosome. In terms of biological role, core component of nucleosome. Nucleosomes wrap and compact DNA into chromatin, limiting DNA accessibility to the cellular machineries which require DNA as a template. Histones thereby play a central role in transcription regulation, DNA repair, DNA replication and chromosomal stability. DNA accessibility is regulated via a complex set of post-translational modifications of histones, also called histone code, and nucleosome remodeling. The protein is Histone H2B.1/H2B.2 of Tigriopus californicus (Marine copepod).